We begin with the raw amino-acid sequence, 91 residues long: Acylphosphatase (91 aa).

Residues 4–91 (RAIVTIKGLV…GEFDDFDVRY (88 aa)) form the Acylphosphatase-like domain. Active-site residues include Arg-19 and Asn-37.

Belongs to the acylphosphatase family.

The enzyme catalyses an acyl phosphate + H2O = a carboxylate + phosphate + H(+). In Geobacter sulfurreducens (strain ATCC 51573 / DSM 12127 / PCA), this protein is Acylphosphatase (acyP).